The primary structure comprises 488 residues: Sterol 14-demethylase (488 aa).

The helical transmembrane segment at 12–32 threads the bilayer; the sequence is TGLVIVATLVIAKLIFSFFTS. Cysteine 433 contacts heme.

It belongs to the cytochrome P450 family. It depends on heme as a cofactor. As to expression, expressed in leaves, roots, stems, siliques, flowers, flower buds and seedlings.

It is found in the membrane. The catalysed reaction is a 14alpha-methyl steroid + 3 reduced [NADPH--hemoprotein reductase] + 3 O2 = a Delta(14) steroid + formate + 3 oxidized [NADPH--hemoprotein reductase] + 4 H2O + 4 H(+). In terms of biological role, involved in sterol biosynthesis. Catalyzes the 14-alpha demethylation of obtusifoliol to 4 alpha-methyl-5 alpha-ergosta-8,14,24(28)-trien-3 beta-ol. The protein is Sterol 14-demethylase (CYP51G1) of Arabidopsis thaliana (Mouse-ear cress).